The following is a 308-amino-acid chain: ATP synthase gamma chain (308 aa).

This sequence belongs to the ATPase gamma chain family. In terms of assembly, F-type ATPases have 2 components, CF(1) - the catalytic core - and CF(0) - the membrane proton channel. CF(1) has five subunits: alpha(3), beta(3), gamma(1), delta(1), epsilon(1). CF(0) has three main subunits: a, b and c.

It is found in the cell membrane. Functionally, produces ATP from ADP in the presence of a proton gradient across the membrane. The gamma chain is believed to be important in regulating ATPase activity and the flow of protons through the CF(0) complex. The protein is ATP synthase gamma chain of Saccharopolyspora erythraea (strain ATCC 11635 / DSM 40517 / JCM 4748 / NBRC 13426 / NCIMB 8594 / NRRL 2338).